A 533-amino-acid chain; its full sequence is Flavin-containing monooxygenase 5 (533 aa).

Arg-5 bears the Dimethylated arginine mark. Residues 10–14 (GSGAS), Glu-33, and 41–42 (LW) contribute to the FAD site. Position 54 is a phosphoserine (Ser-54). Tyr-56 is modified (phosphotyrosine). Ser-58 is modified (phosphoserine). 62-63 (NT) provides a ligand contact to FAD. 196–199 (SGGD) contributes to the NADP(+) binding site. Thr-284 bears the Phosphothreonine mark. Phosphoserine is present on Ser-401. The helical transmembrane segment at 513–533 (LVTVRVLMLAVTFLAVILAYF) threads the bilayer.

This sequence belongs to the FMO family. The cofactor is FAD.

Its subcellular location is the microsome membrane. The protein resides in the endoplasmic reticulum membrane. The catalysed reaction is N,N-dimethylaniline + NADPH + O2 + H(+) = N,N-dimethylaniline N-oxide + NADP(+) + H2O. It catalyses the reaction NADPH + O2 + H(+) = H2O2 + NADP(+). It carries out the reaction heptan-2-one + NADPH + O2 + H(+) = pentyl acetate + NADP(+) + H2O. The enzyme catalyses octan-3-one + NADPH + O2 + H(+) = pentyl propanoate + NADP(+) + H2O. The catalysed reaction is octan-3-one + NADPH + O2 + H(+) = ethyl hexanoate + NADP(+) + H2O. It catalyses the reaction hexan-3-one + NADPH + O2 + H(+) = ethyl butanoate + NADP(+) + H2O. It carries out the reaction hexan-3-one + NADPH + O2 + H(+) = propyl propanoate + NADP(+) + H2O. The enzyme catalyses heptan-4-one + NADPH + O2 + H(+) = propyl butanoate + NADP(+) + H2O. The catalysed reaction is (2E)-geranial + NADPH + O2 + H(+) = (1E)-2,6-dimethylhepta-1,5-dien-1-yl formate + NADP(+) + H2O. It catalyses the reaction sulcatone + NADPH + O2 + H(+) = 4-methylpent-3-en-1-yl acetate + NADP(+) + H2O. In terms of biological role, acts as a Baeyer-Villiger monooxygenase on a broad range of substrates. Catalyzes the insertion of an oxygen atom into a carbon-carbon bond adjacent to a carbonyl, which converts ketones to esters. Active on diverse carbonyl compounds, whereas soft nucleophiles are mostly non- or poorly reactive. In contrast with other forms of FMO it is non- or poorly active on 'classical' substrates such as drugs, pesticides, and dietary components containing soft nucleophilic heteroatoms. Able to oxidize drug molecules bearing a carbonyl group on an aliphatic chain, such as nabumetone and pentoxifylline. Also, in the absence of substrates, shows slow but yet significant NADPH oxidase activity. Acts as a positive modulator of cholesterol biosynthesis as well as glucose homeostasis, promoting metabolic aging via pleiotropic effects. The sequence is that of Flavin-containing monooxygenase 5 from Rattus norvegicus (Rat).